We begin with the raw amino-acid sequence, 339 residues long: Protein-lysine N-methyltransferase EFM3 (339 aa).

Residues Trp137 and 174–176 contribute to the S-adenosyl-L-methionine site; that span reads GAG. A Phosphothreonine modification is found at Thr177. S-adenosyl-L-methionine contacts are provided by Asp199, Trp233, and Ala248.

The protein belongs to the class I-like SAM-binding methyltransferase superfamily. EEF2KMT family.

The protein localises to the cytoplasm. In terms of biological role, S-adenosyl-L-methionine-dependent protein-lysine N-methyltransferase that mono-, di- and trimethylates elongation factor 2 (EFT1/EFT2) at 'Lys-509'. The sequence is that of Protein-lysine N-methyltransferase EFM3 from Saccharomyces cerevisiae (strain ATCC 204508 / S288c) (Baker's yeast).